Reading from the N-terminus, the 168-residue chain is Peptide deformylase (168 aa).

Fe cation-binding residues include cysteine 92 and histidine 134. Residue glutamate 135 is part of the active site. Histidine 138 contributes to the Fe cation binding site.

It belongs to the polypeptide deformylase family. Fe(2+) serves as cofactor.

It carries out the reaction N-terminal N-formyl-L-methionyl-[peptide] + H2O = N-terminal L-methionyl-[peptide] + formate. Functionally, removes the formyl group from the N-terminal Met of newly synthesized proteins. Requires at least a dipeptide for an efficient rate of reaction. N-terminal L-methionine is a prerequisite for activity but the enzyme has broad specificity at other positions. In Azotobacter vinelandii (strain DJ / ATCC BAA-1303), this protein is Peptide deformylase.